Reading from the N-terminus, the 348-residue chain is Replication-associated protein (348 aa).

Low complexity predominate over residues 1–17 (MRAPASSAASNRPGPSN). The disordered stretch occupies residues 1 to 22 (MRAPASSAASNRPGPSNHPTPR). The region spanning 22-125 (RWNSKQFFLT…NGDSDEMGEL (104 aa)) is the CRESS-DNA virus Rep endonuclease domain. The RCR-1 motif lies at 29–32 (FLTY). Positions 63, 71, and 73 each coordinate a divalent metal cation. The RCR-2 motif lies at 71 to 73 (HLH). The For DNA cleavage activity role is filled by tyrosine 111. The short motif at 111-114 (YISK) is the RCR-3 element. The oligomerization stretch occupies residues 176–188 (SAAALFTEPPPVY). 228 to 235 (GPSRTGKT) serves as a coordination point for ATP. The segment at 251–269 (VDFTHYDKDAIYNVIDDVP) is transactivation. The Nuclear localization signal signature appears at 291-301 (KYGKKKKIPGG).

This sequence belongs to the geminiviridae Rep protein family. In terms of assembly, homooligomer. Rep binds to repeated DNA motifs (iterons). Forms the O-complex, which is a Rep-DNA complex involved in the initiation of RCR. Part of the C- and V-complexes which are RepA-Rep-DNA complexes involved in the c-sense and v-sense transcription. Requires Mg(2+) as cofactor. The cofactor is Mn(2+).

It is found in the host nucleus. Its function is as follows. Essential for the replication of viral ssDNA. The closed circular ssDNA genome is first converted to a superhelical dsDNA. Rep binds a specific region at the genome origin of replication. It introduces an endonucleolytic nick within the conserved sequence 5'-TAATATTAC-3' in the intergenic region of the genome present in all geminiviruses, thereby initiating the rolling circle replication (RCR). Following cleavage, binds covalently to the 5'-phosphate of DNA as a tyrosyl ester. The cleavage gives rise to a free 3'-OH that serves as a primer for the cellular DNA polymerase. The polymerase synthesizes the (+) strand DNA by rolling circle mechanism. After one round of replication, a Rep-catalyzed nucleotidyl transfer reaction releases a circular single-stranded virus genome, thereby terminating the replication. Displays origin-specific DNA cleavage, nucleotidyl transferase, ATPase and helicase activities. Acts as an inhibitor of C-sense gene transcription. This chain is Replication-associated protein, found in Miscanthus streak virus (isolate 91) (MiSV).